Consider the following 609-residue polypeptide: 2',5'-phosphodiesterase 12 (609 aa).

A mitochondrion-targeting transit peptide spans 1-42 (MWRLPGARAALRVIRTAVEKLSRAEAGSQTAAGAMERAVVRC). Residues 89–99 (AAAAKKSRKSR) show a composition bias toward basic residues. 2 disordered regions span residues 89–111 (AAAA…CSGP) and 206–230 (AEPE…ETDV). 2 stretches are compositionally biased toward low complexity: residues 100–111 (PNASGGAACSGP) and 213–224 (PSSLSPSSPSSS). Ser217 carries the post-translational modification Phosphoserine. Positions 351, 496, and 498 each coordinate Mg(2+). Residue Asp496 is the Proton donor/acceptor of the active site.

It belongs to the CCR4/nocturin family. Mg(2+) serves as cofactor. In terms of tissue distribution, ubiquitous.

The protein resides in the mitochondrion matrix. It carries out the reaction Exonucleolytic cleavage of poly(A) to 5'-AMP.. Functionally, enzyme that cleaves 2',5'-phosphodiester bond linking adenosines of the 5'-triphosphorylated oligoadenylates, triphosphorylated oligoadenylates referred as 2-5A modulates the 2-5A system. Degrades triphosphorylated 2-5A to produce AMP and ATP. Also cleaves 3',5'-phosphodiester bond of oligoadenylates. Plays a role as a negative regulator of the 2-5A system that is one of the major pathways for antiviral and antitumor functions induced by interferons (IFNs). Suppression of this enzyme increases cellular 2-5A levels and decreases viral replication in cultured small-airway epithelial cells and Hela cells. This is 2',5'-phosphodiesterase 12 (PDE12) from Homo sapiens (Human).